Here is a 272-residue protein sequence, read N- to C-terminus: NH(3)-dependent NAD(+) synthetase (272 aa).

Position 45–52 (45–52 (GISGGQDS)) interacts with ATP. Asp51 provides a ligand contact to Mg(2+). Arg138 lines the deamido-NAD(+) pocket. Thr158 lines the ATP pocket. Mg(2+) is bound at residue Glu163. Deamido-NAD(+)-binding residues include Lys171 and Asp178. 2 residues coordinate ATP: Lys187 and Thr209. Residue 258-259 (HK) participates in deamido-NAD(+) binding.

Belongs to the NAD synthetase family. In terms of assembly, homodimer.

It catalyses the reaction deamido-NAD(+) + NH4(+) + ATP = AMP + diphosphate + NAD(+) + H(+). The protein operates within cofactor biosynthesis; NAD(+) biosynthesis; NAD(+) from deamido-NAD(+) (ammonia route): step 1/1. Functionally, catalyzes the ATP-dependent amidation of deamido-NAD to form NAD. Uses ammonia as a nitrogen source. This chain is NH(3)-dependent NAD(+) synthetase, found in Bacillus velezensis (strain DSM 23117 / BGSC 10A6 / LMG 26770 / FZB42) (Bacillus amyloliquefaciens subsp. plantarum).